The sequence spans 173 residues: Bifunctional protein PyrR (173 aa).

Residues 93–105 (VILIDDVLYTGRT) carry the PRPP-binding motif.

The protein belongs to the purine/pyrimidine phosphoribosyltransferase family. PyrR subfamily. Homodimer and homohexamer; in equilibrium.

It catalyses the reaction UMP + diphosphate = 5-phospho-alpha-D-ribose 1-diphosphate + uracil. Regulates transcriptional attenuation of the pyrimidine nucleotide (pyr) operon by binding in a uridine-dependent manner to specific sites on pyr mRNA. This disrupts an antiterminator hairpin in the RNA and favors formation of a downstream transcription terminator, leading to a reduced expression of downstream genes. Its function is as follows. Also displays a weak uracil phosphoribosyltransferase activity which is not physiologically significant. The chain is Bifunctional protein PyrR from Streptococcus pyogenes serotype M49 (strain NZ131).